The sequence spans 271 residues: Sec-independent protein translocase protein TatC (271 aa).

A run of 5 helical transmembrane segments spans residues 24–44 (ISVG…EQIF), 78–98 (FFAG…LFIA), 112–132 (FLFV…YFVF), 159–179 (LVIK…GLLL), and 215–235 (FTQV…IFFG). The interval 247 to 271 (AAEEAQWAADHNVDDDDVDHPEHKA) is disordered.

The protein belongs to the TatC family. The Tat system comprises two distinct complexes: a TatABC complex, containing multiple copies of TatA, TatB and TatC subunits, and a separate TatA complex, containing only TatA subunits. Substrates initially bind to the TatABC complex, which probably triggers association of the separate TatA complex to form the active translocon.

It localises to the cell inner membrane. Functionally, part of the twin-arginine translocation (Tat) system that transports large folded proteins containing a characteristic twin-arginine motif in their signal peptide across membranes. Together with TatB, TatC is part of a receptor directly interacting with Tat signal peptides. The protein is Sec-independent protein translocase protein TatC of Magnetococcus marinus (strain ATCC BAA-1437 / JCM 17883 / MC-1).